A 1139-amino-acid chain; its full sequence is Phospholipid-transporting ATPase tat-1 (1139 aa).

The next 3 membrane-spanning stretches (helical) occupy residues 78–98 (YTTAVPFLIILSVSALKEIFE), 276–296 (IIFLFFVLVALALISATGSEI), and 318–338 (SFLWGVLTFFILYNNLIPISL). D388 acts as the 4-aspartylphosphate intermediate in catalysis. The next 6 membrane-spanning stretches (helical) occupy residues 831–851 (ICLYIIELWFAMFSAWSGQTI), 855–875 (WTIGMFNVIFTAWPPVVLGLF), 901–921 (IGNFSLWIGLAIVHSLSLFFL), 935–955 (GLTGGWLMLGNCAYTFVVATV), 972–992 (VACIGSIGLWIVFVIVYSLVF), and 1013–1033 (YTFWLALLFIPLATLLWDLVI).

This sequence belongs to the cation transport ATPase (P-type) (TC 3.A.3) family. Type IV subfamily.

The protein resides in the cell membrane. Its subcellular location is the early endosome membrane. It localises to the recycling endosome membrane. It carries out the reaction ATP + H2O + phospholipidSide 1 = ADP + phosphate + phospholipidSide 2.. It catalyses the reaction a 1,2-diacyl-sn-glycero-3-phospho-L-serine(out) + ATP + H2O = a 1,2-diacyl-sn-glycero-3-phospho-L-serine(in) + ADP + phosphate + H(+). Functionally, transports phosphatidylserine from the outer to the inner leaflet of the plasma membrane, thereby maintaining the enrichment of this phospholipid in the inner leaflet. Ectopic exposure of phosphatidylserine on the cell surface may result in removal of living cells by neighboring phagocytes. Regulation of the phosphatidylserine distribution in plasma membranes is likely to help in the maintenance and control of the membrane surface charge. Plays a role in the formation of the tubular membrane structure and in membrane trafficking and is specifically involved in the recycling and degradation of endocytic cargo, likely with its chaperone protein chat-1. The polypeptide is Phospholipid-transporting ATPase tat-1 (tat-1) (Caenorhabditis elegans).